Reading from the N-terminus, the 416-residue chain is Glutamyl-tRNA reductase (416 aa).

Substrate contacts are provided by residues 50–53 (TCNR), serine 109, 114–116 (EPQ), and glutamine 120. Catalysis depends on cysteine 51, which acts as the Nucleophile. Residue 189-194 (GAGEMI) coordinates NADP(+).

The protein belongs to the glutamyl-tRNA reductase family. In terms of assembly, homodimer.

The enzyme catalyses (S)-4-amino-5-oxopentanoate + tRNA(Glu) + NADP(+) = L-glutamyl-tRNA(Glu) + NADPH + H(+). The protein operates within porphyrin-containing compound metabolism; protoporphyrin-IX biosynthesis; 5-aminolevulinate from L-glutamyl-tRNA(Glu): step 1/2. Functionally, catalyzes the NADPH-dependent reduction of glutamyl-tRNA(Glu) to glutamate 1-semialdehyde (GSA). The polypeptide is Glutamyl-tRNA reductase (Vesicomyosocius okutanii subsp. Calyptogena okutanii (strain HA)).